The primary structure comprises 697 residues: Serine/threonine-protein kinase tousled-like 2 (697 aa).

2 disordered regions span residues 27–136 (KAPL…TAPV) and 289–315 (LAKR…NKTN). The segment covering 31-44 (NSESSNQSLCSLGS) has biased composition (polar residues). Over residues 46–62 (SDKELEQTPEKKQNDQR) the composition is skewed to basic and acidic residues. A compositionally biased stretch (low complexity) spans 111–131 (SSPQHSLSNPLPLPSQQCSPP). Coiled-coil stretches lie at residues 264-293 (AFQN…AKRK) and 334-372 (FKLR…IHNE). Positions 387 to 666 (YLLLHLLGRG…VQQLACDPYL (280 aa)) constitute a Protein kinase domain. Residues 393–401 (LGRGGFSEV) and Lys-416 contribute to the ATP site. Residue Asp-517 is the Proton acceptor of the active site.

Belongs to the protein kinase superfamily. Ser/Thr protein kinase family. As to quaternary structure, monomer. May form homodimers; homodimerization may enhance autophosphoylation and enzymatic activity. Heterodimer with TLK1. Mg(2+) is required as a cofactor. In terms of processing, phosphorylated. Autophosphorylated; phosphorylation promotes the assembly of higher order oligomers and enzymatic activity.

The protein localises to the nucleus. Its subcellular location is the nucleoplasm. It is found in the cytoplasm. It localises to the perinuclear region. The protein resides in the cytoskeleton. It carries out the reaction L-seryl-[protein] + ATP = O-phospho-L-seryl-[protein] + ADP + H(+). It catalyses the reaction L-threonyl-[protein] + ATP = O-phospho-L-threonyl-[protein] + ADP + H(+). Functionally, serine/threonine-protein kinase involved in the process of chromatin assembly and probably also DNA replication, transcription, repair, and chromosome segregation. Negative regulator of amino acid starvation-induced autophagy. The sequence is that of Serine/threonine-protein kinase tousled-like 2 from Xenopus tropicalis (Western clawed frog).